A 266-amino-acid polypeptide reads, in one-letter code: Outer membrane protein OmpK (266 aa).

A signal peptide spans 1 to 20 (MRKSLLALSLLAATSAPVLA).

Belongs to the nucleoside-specific channel-forming outer membrane porin (Tsx) (TC 1.B.10) family.

Its subcellular location is the cell outer membrane. Its function is as follows. Serves as receptor for a broad-host-range vibriophage, KVP40. The protein is Outer membrane protein OmpK (ompK) of Vibrio parahaemolyticus serotype O3:K6 (strain RIMD 2210633).